Reading from the N-terminus, the 407-residue chain is Growth/differentiation factor 11 (407 aa).

The first 24 residues, 1-24 (MVLAAPLLLGFLLLALELRPRGEA), serve as a signal peptide directing secretion. The propeptide occupies 25–298 (AEGPAAAAAA…VLENTKRSRR (274 aa)). N-linked (GlcNAc...) asparagine glycosylation is present at Asn94. Cystine bridges form between Cys304–Cys314, Cys313–Cys372, Cys341–Cys404, and Cys345–Cys406.

The protein belongs to the TGF-beta family. In terms of assembly, homodimer; disulfide-linked. Interacts directly with ACVR2B. Interacts directly with ACVR2A. Interacts with ACVR1B, TGFBR1 and ACVR1C in an ACVR2B-dependent manner. Interacts with FST isoform 2/FS-288. Synthesized as large precursor molecule that undergoes proteolytic cleavage by furin-like proteases. This produces an inactive form consisting of the mature C-terminal portion non-covalently bound to its cleaved N-terminal propeptide. Activation of the mature form requires additional cleavage of the propeptide by a tolloid-like metalloproteinase. In terms of tissue distribution, in the embryo, strong expression is seen in the palatal epithelia, including the medial edge epithelial and midline epithelial seam of the palatal shelves. Less pronounced expression is also seen throughout the palatal shelf and tongue mesenchyme.

The protein localises to the secreted. Secreted signal that acts globally to regulate anterior/posterior axial patterning during development. May play critical roles in patterning both mesodermal and neural tissues. It is required for proper vertebral patterning and orofacial development. Signals through activin receptors type-2, ACVR2A and ACVR2B, and activin receptors type-1, ACVR1B, ACVR1C and TGFBR1 leading to the phosphorylation of SMAD2 and SMAD3. In Homo sapiens (Human), this protein is Growth/differentiation factor 11 (GDF11).